A 62-amino-acid chain; its full sequence is Large ribosomal subunit protein bL32 (62 aa).

Positions 1–16 (MAVPKRKTSPSRRGMR) are enriched in basic residues. The tract at residues 1–62 (MAVPKRKTSP…QILKPKTAEV (62 aa)) is disordered. Residues 28-44 (VEDKDSGELRRPHHLDL) are compositionally biased toward basic and acidic residues.

This sequence belongs to the bacterial ribosomal protein bL32 family.

This chain is Large ribosomal subunit protein bL32, found in Azorhizobium caulinodans (strain ATCC 43989 / DSM 5975 / JCM 20966 / LMG 6465 / NBRC 14845 / NCIMB 13405 / ORS 571).